A 324-amino-acid polypeptide reads, in one-letter code: Putative ribose-phosphate pyrophosphokinase 2 (324 aa).

Residues Asp43 to Glu45 and Arg102 to Gln103 contribute to the ATP site. His136 contributes to the Mg(2+) binding site. D-ribose 5-phosphate-binding positions include Asp225 and Asn229–Thr233.

Belongs to the ribose-phosphate pyrophosphokinase family. Class I subfamily. As to quaternary structure, homohexamer. Mg(2+) is required as a cofactor.

The protein resides in the cytoplasm. It catalyses the reaction D-ribose 5-phosphate + ATP = 5-phospho-alpha-D-ribose 1-diphosphate + AMP + H(+). Its pathway is metabolic intermediate biosynthesis; 5-phospho-alpha-D-ribose 1-diphosphate biosynthesis; 5-phospho-alpha-D-ribose 1-diphosphate from D-ribose 5-phosphate (route I): step 1/1. Functionally, involved in the biosynthesis of the central metabolite phospho-alpha-D-ribosyl-1-pyrophosphate (PRPP) via the transfer of pyrophosphoryl group from ATP to 1-hydroxyl of ribose-5-phosphate (Rib-5-P). This Streptococcus agalactiae serotype III (strain NEM316) protein is Putative ribose-phosphate pyrophosphokinase 2.